A 134-amino-acid chain; its full sequence is Pre-histone-like nucleoprotein (134 aa).

Positions 2–23 are excised as a propeptide; sequence AILISPTNNTGWGLGTHKLFGG. The tract at residues 40–62 is disordered; it reads RASWGSKGRRRRQGRARGAPLDP. Positions 125 to 134 match the Nuclear localization signal motif; that stretch reads KRKRRVRFRQ.

The protein belongs to the adenoviridae histone-like nucleoprotein family. Interacts with the core-capsid bridging protein; this interaction bridges the virus core to the capsid. Interacts with host NPM1; this interaction might play a role in placing the pre-histone-like nucleoprotein on the viral DNA or regulating viral gene expression. Interacts with host HMGB1; this interaction inhibits host immune response. In terms of processing, cleaved near the N-terminus by the viral protease during virion maturation to form the mature protein.

Its subcellular location is the virion. The protein resides in the host nucleus. The protein localises to the host nucleolus. In terms of biological role, plays a role in the inhibition of host immune response within the nucleus. Interacts with cellular nucleosomes and immobilizes the host immune danger signal HMGB1 on chromatin. In turn, prevents HMGB1 release out of the cell and thus decreases inflammation. Also plays a role in the wrapping and condensation of the viral DNA. May also promote viral genome import into the nucleus. The chain is Pre-histone-like nucleoprotein from Canis lupus familiaris (Dog).